A 307-amino-acid polypeptide reads, in one-letter code: Undecaprenyl-diphosphatase 2 (307 aa).

8 helical membrane-spanning segments follow: residues 19–41 (GVTE…IIGF), 56–76 (IHMF…VLYW), 117–137 (FKFW…GLPF), 144–164 (LLFF…WMIF), 208–228 (IIGA…SFFL), 229–249 (AIPM…VVLS), 251–271 (VQIL…LVVV), and 285–305 (IFAV…FTKV).

The protein belongs to the UppP family.

It is found in the cell membrane. It catalyses the reaction di-trans,octa-cis-undecaprenyl diphosphate + H2O = di-trans,octa-cis-undecaprenyl phosphate + phosphate + H(+). In terms of biological role, catalyzes the dephosphorylation of undecaprenyl diphosphate (UPP). Confers resistance to bacitracin. This chain is Undecaprenyl-diphosphatase 2, found in Clostridium acetobutylicum (strain ATCC 824 / DSM 792 / JCM 1419 / IAM 19013 / LMG 5710 / NBRC 13948 / NRRL B-527 / VKM B-1787 / 2291 / W).